A 95-amino-acid chain; its full sequence is Acylphosphatase (95 aa).

In terms of domain architecture, Acylphosphatase-like spans 7–94; it reads AALVRITGRV…EAPAGFRITR (88 aa). Catalysis depends on residues Arg-22 and Asn-40. Low complexity predominate over residues 76–88; sequence VASEEASSAEAPA. A disordered region spans residues 76 to 95; it reads VASEEASSAEAPAGFRITRG.

This sequence belongs to the acylphosphatase family.

The enzyme catalyses an acyl phosphate + H2O = a carboxylate + phosphate + H(+). In Rhizobium meliloti (strain 1021) (Ensifer meliloti), this protein is Acylphosphatase (acyP).